A 526-amino-acid chain; its full sequence is UDP-glycosyltransferase UGT5 (526 aa).

Residues 1–474 (MIFFYFLTLT…TAAVDMPWYQ (474 aa)) are Lumenal-facing. 3 N-linked (GlcNAc...) asparagine glycosylation sites follow: Asn49, Asn124, and Asn283. The chain crosses the membrane as a helical span at residues 475-495 (YLLLDVIAFLIFILVSVILII). The Cytoplasmic segment spans residues 496–526 (YYGVKISLRYLCALIFGNSSSLKPTKKVKDN).

The protein belongs to the UDP-glycosyltransferase family.

The protein resides in the microsome membrane. In terms of biological role, catalyzes the transfer of a glycosyl group from a UDP-sugar to an acceptor molecule. The chain is UDP-glycosyltransferase UGT5 from Dactylopius coccus (Cochineal).